Reading from the N-terminus, the 31-residue chain is MEISTTQISIILLIALIPAFFSLKLGKELYK.

A helical membrane pass occupies residues Gln-7–Gly-26.

The protein belongs to the PsaM family.

Its subcellular location is the plastid. It localises to the chloroplast thylakoid membrane. The protein is Photosystem I reaction center subunit XII of Euglena myxocylindracea.